A 392-amino-acid polypeptide reads, in one-letter code: Formate-dependent phosphoribosylglycinamide formyltransferase (392 aa).

Residues E22–L23 and E82 contribute to the N(1)-(5-phospho-beta-D-ribosyl)glycinamide site. ATP contacts are provided by residues R114, K155, S160–Q165, E195–V198, and E203. One can recognise an ATP-grasp domain in the interval R119–L308. Mg(2+)-binding residues include E267 and E279. Residues D286, K355, and R362 to R363 each bind N(1)-(5-phospho-beta-D-ribosyl)glycinamide.

This sequence belongs to the PurK/PurT family. In terms of assembly, homodimer.

The enzyme catalyses N(1)-(5-phospho-beta-D-ribosyl)glycinamide + formate + ATP = N(2)-formyl-N(1)-(5-phospho-beta-D-ribosyl)glycinamide + ADP + phosphate + H(+). It participates in purine metabolism; IMP biosynthesis via de novo pathway; N(2)-formyl-N(1)-(5-phospho-D-ribosyl)glycinamide from N(1)-(5-phospho-D-ribosyl)glycinamide (formate route): step 1/1. Involved in the de novo purine biosynthesis. Catalyzes the transfer of formate to 5-phospho-ribosyl-glycinamide (GAR), producing 5-phospho-ribosyl-N-formylglycinamide (FGAR). Formate is provided by PurU via hydrolysis of 10-formyl-tetrahydrofolate. The protein is Formate-dependent phosphoribosylglycinamide formyltransferase of Shigella boydii serotype 4 (strain Sb227).